Reading from the N-terminus, the 285-residue chain is Bifunctional protein FolD (285 aa).

Residues 166–168 (GRS), Ser191, and Thr232 contribute to the NADP(+) site.

The protein belongs to the tetrahydrofolate dehydrogenase/cyclohydrolase family. In terms of assembly, homodimer.

The catalysed reaction is (6R)-5,10-methylene-5,6,7,8-tetrahydrofolate + NADP(+) = (6R)-5,10-methenyltetrahydrofolate + NADPH. It catalyses the reaction (6R)-5,10-methenyltetrahydrofolate + H2O = (6R)-10-formyltetrahydrofolate + H(+). The protein operates within one-carbon metabolism; tetrahydrofolate interconversion. Functionally, catalyzes the oxidation of 5,10-methylenetetrahydrofolate to 5,10-methenyltetrahydrofolate and then the hydrolysis of 5,10-methenyltetrahydrofolate to 10-formyltetrahydrofolate. This chain is Bifunctional protein FolD, found in Chloroflexus aurantiacus (strain ATCC 29366 / DSM 635 / J-10-fl).